The chain runs to 506 residues: Glutamate--tRNA ligase (506 aa).

The short motif at 24 to 34 is the 'HIGH' region element; the sequence is PSPTGLQHIGG. Positions 121, 123, 148, and 150 each coordinate Zn(2+). The 'KMSKS' region signature appears at 266 to 270; that stretch reads KLSKR. Residue K269 coordinates ATP.

The protein belongs to the class-I aminoacyl-tRNA synthetase family. Glutamate--tRNA ligase type 1 subfamily. In terms of assembly, monomer. Requires Zn(2+) as cofactor.

It localises to the cytoplasm. It catalyses the reaction tRNA(Glu) + L-glutamate + ATP = L-glutamyl-tRNA(Glu) + AMP + diphosphate. In terms of biological role, catalyzes the attachment of glutamate to tRNA(Glu) in a two-step reaction: glutamate is first activated by ATP to form Glu-AMP and then transferred to the acceptor end of tRNA(Glu). The chain is Glutamate--tRNA ligase from Borrelia recurrentis (strain A1).